We begin with the raw amino-acid sequence, 422 residues long: 26S proteasome non-ATPase regulatory subunit 11B (422 aa).

In terms of domain architecture, PCI spans 228 to 392 (AYSYFFEAFE…DVLIIFEEPP (165 aa)).

This sequence belongs to the proteasome subunit S9 family. As to quaternary structure, component of the lid subcomplex of the 19S proteasome regulatory particle complex (also named PA700 complex). The 26S proteasome consists of a 20S proteasome core and two 19S regulatory subunits.

It is found in the nucleus. The protein resides in the cytoplasm. The protein localises to the cytosol. Component of the lid subcomplex of the 26S proteasome, a multiprotein complex involved in the ATP-dependent degradation of ubiquitinated proteins. In the complex, psmd11b is required for proteasome assembly. The sequence is that of 26S proteasome non-ATPase regulatory subunit 11B (psmd11b) from Danio rerio (Zebrafish).